The following is a 109-amino-acid chain: Nucleoid-associated protein MADE_1013280 (109 aa).

The disordered stretch occupies residues 86 to 109; that stretch reads TSKEKMGDVTGGMPLPPGFKMPGF. A compositionally biased stretch (pro residues) spans 99-109; it reads PLPPGFKMPGF.

The protein belongs to the YbaB/EbfC family. In terms of assembly, homodimer.

It is found in the cytoplasm. The protein localises to the nucleoid. In terms of biological role, binds to DNA and alters its conformation. May be involved in regulation of gene expression, nucleoid organization and DNA protection. This is Nucleoid-associated protein MADE_1013280 from Alteromonas mediterranea (strain DSM 17117 / CIP 110805 / LMG 28347 / Deep ecotype).